The following is a 273-amino-acid chain: Probable branched-chain-amino-acid aminotransferase (273 aa).

At K133 the chain carries N6-(pyridoxal phosphate)lysine.

Belongs to the class-IV pyridoxal-phosphate-dependent aminotransferase family. Requires pyridoxal 5'-phosphate as cofactor.

It carries out the reaction L-leucine + 2-oxoglutarate = 4-methyl-2-oxopentanoate + L-glutamate. It catalyses the reaction L-isoleucine + 2-oxoglutarate = (S)-3-methyl-2-oxopentanoate + L-glutamate. The catalysed reaction is L-valine + 2-oxoglutarate = 3-methyl-2-oxobutanoate + L-glutamate. It functions in the pathway amino-acid biosynthesis; L-isoleucine biosynthesis; L-isoleucine from 2-oxobutanoate: step 4/4. It participates in amino-acid biosynthesis; L-leucine biosynthesis; L-leucine from 3-methyl-2-oxobutanoate: step 4/4. Its pathway is amino-acid biosynthesis; L-valine biosynthesis; L-valine from pyruvate: step 4/4. Its function is as follows. Acts on leucine, isoleucine and valine. The protein is Probable branched-chain-amino-acid aminotransferase (ilvE) of Thermotoga maritima (strain ATCC 43589 / DSM 3109 / JCM 10099 / NBRC 100826 / MSB8).